We begin with the raw amino-acid sequence, 738 residues long: Integrin beta-2-like protein (738 aa).

The N-terminal stretch at 1–22 (MLGQCTLLPVLAGLLSLESALS) is a signal peptide. The Extracellular segment spans residues 23-671 (QLCTKDNVST…LVCAEISNTT (649 aa)). The PSI domain maps to 24–74 (LCTKDNVSTCQDCIRSGPSCAWCQKLNFTGRGEPDSVRCDTPEQLLLKGCT). 23 cysteine pairs are disulfide-bonded: Cys-25/Cys-419, Cys-33/Cys-43, Cys-36/Cys-73, Cys-46/Cys-62, Cys-218/Cys-258, Cys-358/Cys-372, Cys-421/Cys-439, Cys-431/Cys-442, Cys-444/Cys-453, Cys-455/Cys-486, Cys-469/Cys-484, Cys-478/Cys-489, Cys-491/Cys-506, Cys-508/Cys-531, Cys-513/Cys-529, Cys-521/Cys-534, Cys-536/Cys-545, Cys-547/Cys-570, Cys-554/Cys-568, Cys-562/Cys-573, Cys-575/Cys-584, Cys-594/Cys-603, and Cys-600/Cys-664. The N-linked (GlcNAc...) asparagine glycan is linked to Asn-29. Residues Asn-50, Asn-102, Asn-173, Asn-226, Asn-252, Asn-342, Asn-360, and Asn-386 are each glycosylated (N-linked (GlcNAc...) asparagine). A VWFA domain is found at 126–329 (SVDLYFLMGL…DSSNVAQLIR (204 aa)). I-EGF domains follow at residues 421-454 (CQEQ…KNCE), 455-507 (CQTQ…QYCE), 508-546 (CNNV…SACQ), and 547-585 (CRMS…PLCE). N-linked (GlcNAc...) asparagine glycosylation occurs at Asn-473. Residues Asn-627 and Asn-669 are each glycosylated (N-linked (GlcNAc...) asparagine). The helical transmembrane segment at 672 to 692 (ILLGVIVGVLLAVIFLLVYCM) threads the bilayer. Residues 693–738 (VYLKGTQKAAKLPRKGGAQSTLAQQPHFQEPHHVEPVWNQERQGTQ) are Cytoplasmic-facing. The segment at 709–738 (GAQSTLAQQPHFQEPHHVEPVWNQERQGTQ) is disordered. Residues 710 to 719 (AQSTLAQQPH) show a composition bias toward polar residues.

The protein belongs to the integrin beta chain family. Monomer and homodimer. Unlike integrin beta chains, no alpha chain partner has yet been found. In terms of processing, N-glycosylated. In terms of tissue distribution, expressed predominantly in maturing and mature neutrophils.

The protein localises to the cell membrane. Its function is as follows. During inflammatory stimulation, plays a role in retaining Cxcl13-expressing cells at the site of the inflammatory response. This Mus musculus (Mouse) protein is Integrin beta-2-like protein.